We begin with the raw amino-acid sequence, 210 residues long: Large ribosomal subunit protein uL3 (210 aa).

The protein belongs to the universal ribosomal protein uL3 family. As to quaternary structure, part of the 50S ribosomal subunit. Forms a cluster with proteins L14 and L19.

In terms of biological role, one of the primary rRNA binding proteins, it binds directly near the 3'-end of the 23S rRNA, where it nucleates assembly of the 50S subunit. This is Large ribosomal subunit protein uL3 from Geobacter metallireducens (strain ATCC 53774 / DSM 7210 / GS-15).